The following is a 548-amino-acid chain: Glucan endo-1,3-beta-glucosidase (548 aa).

The tat-type signal signal peptide spans 1–36; it reads MPHDRKNSSRRAWAALCAAVLAVSGALVGVAAPASA. The GH64 domain maps to 38 to 396; the sequence is PATIPLTITN…PQAAYIKLDP (359 aa). Glu153 serves as the catalytic Proton donor. Residue Asp169 is the Proton acceptor of the active site. One can recognise a Ricin B-type lectin domain in the interval 422–548; sequence GTGALRIGST…NQTEAQRWTL (127 aa).

It belongs to the glycosyl hydrolase 64 family. Predicted to be exported by the Tat system. The position of the signal peptide cleavage has not been experimentally proven.

Its subcellular location is the periplasm. It carries out the reaction Hydrolysis of (1-&gt;3)-beta-D-glucosidic linkages in (1-&gt;3)-beta-D-glucans.. Its function is as follows. Lysis of cellular walls containing beta-1,3-glucans. Implicated in the defense against fungal pathogens. The chain is Glucan endo-1,3-beta-glucosidase (glcI) from Arthrobacter sp. (strain YCWD3).